A 493-amino-acid chain; its full sequence is Argininosuccinate lyase (493 aa).

Belongs to the lyase 1 family. Argininosuccinate lyase subfamily.

Its subcellular location is the cytoplasm. It catalyses the reaction 2-(N(omega)-L-arginino)succinate = fumarate + L-arginine. It functions in the pathway amino-acid biosynthesis; L-arginine biosynthesis; L-arginine from L-ornithine and carbamoyl phosphate: step 3/3. This is Argininosuccinate lyase from Methanospirillum hungatei JF-1 (strain ATCC 27890 / DSM 864 / NBRC 100397 / JF-1).